A 188-amino-acid chain; its full sequence is Peptidyl-prolyl cis-trans isomerase (188 aa).

A signal peptide spans 1–20 (MLKRVAIVLGGLLISAHALA). The 161-residue stretch at 21 to 181 (NTMVEMKTNL…QPVKIISVQI (161 aa)) folds into the PPIase cyclophilin-type domain.

Belongs to the cyclophilin-type PPIase family.

Its subcellular location is the periplasm. It catalyses the reaction [protein]-peptidylproline (omega=180) = [protein]-peptidylproline (omega=0). In terms of biological role, PPIases accelerate the folding of proteins. It catalyzes the cis-trans isomerization of proline imidic peptide bonds in oligopeptides. This protein is not essential for growth. Presumably plays a role in signal transduction. This Acinetobacter baylyi (strain ATCC 33305 / BD413 / ADP1) protein is Peptidyl-prolyl cis-trans isomerase (rotA).